A 362-amino-acid polypeptide reads, in one-letter code: GTPase Obg (362 aa).

The region spanning 1–159 (MKFIDEARIE…RKLKLELKVL (159 aa)) is the Obg domain. A disordered region spans residues 129 to 148 (HFKSSTNRAPRQKTNGKEGE). Positions 130–141 (FKSSTNRAPRQK) are enriched in polar residues. An OBG-type G domain is found at 160 to 334 (ADVGLLGMPN…LCYALQDYLD (175 aa)). GTP-binding positions include 166 to 173 (GMPNAGKS), 191 to 195 (FTTLH), 213 to 216 (DIPG), 284 to 287 (NKVD), and 315 to 317 (SAL). Residues Ser173 and Thr193 each coordinate Mg(2+). Positions 340-362 (RDDAEERAADPRYQDQAADKSPD) are disordered.

Belongs to the TRAFAC class OBG-HflX-like GTPase superfamily. OBG GTPase family. As to quaternary structure, monomer. Mg(2+) serves as cofactor.

The protein localises to the cytoplasm. In terms of biological role, an essential GTPase which binds GTP, GDP and possibly (p)ppGpp with moderate affinity, with high nucleotide exchange rates and a fairly low GTP hydrolysis rate. Plays a role in control of the cell cycle, stress response, ribosome biogenesis and in those bacteria that undergo differentiation, in morphogenesis control. The protein is GTPase Obg of Polynucleobacter asymbioticus (strain DSM 18221 / CIP 109841 / QLW-P1DMWA-1) (Polynucleobacter necessarius subsp. asymbioticus).